Here is a 279-residue protein sequence, read N- to C-terminus: Probable endonuclease 4 (279 aa).

Residues histidine 69, histidine 109, glutamate 145, aspartate 179, histidine 182, histidine 216, aspartate 229, histidine 231, and glutamate 261 each coordinate Zn(2+).

Belongs to the AP endonuclease 2 family. The cofactor is Zn(2+).

It carries out the reaction Endonucleolytic cleavage to 5'-phosphooligonucleotide end-products.. Functionally, endonuclease IV plays a role in DNA repair. It cleaves phosphodiester bonds at apurinic or apyrimidinic (AP) sites, generating a 3'-hydroxyl group and a 5'-terminal sugar phosphate. This Tolumonas auensis (strain DSM 9187 / NBRC 110442 / TA 4) protein is Probable endonuclease 4.